Here is an 80-residue protein sequence, read N- to C-terminus: ATP synthase subunit c (80 aa).

Transmembrane regions (helical) follow at residues 11 to 31 (IAATIMMGLAAIGAAIGIGIL) and 54 to 74 (FIVMGLVDAIPMITVGLGLYI).

Belongs to the ATPase C chain family. F-type ATPases have 2 components, F(1) - the catalytic core - and F(0) - the membrane proton channel. F(1) has five subunits: alpha(3), beta(3), gamma(1), delta(1), epsilon(1). F(0) has three main subunits: a(1), b(2) and c(10-14). The alpha and beta chains form an alternating ring which encloses part of the gamma chain. F(1) is attached to F(0) by a central stalk formed by the gamma and epsilon chains, while a peripheral stalk is formed by the delta and b chains.

Its subcellular location is the cell membrane. F(1)F(0) ATP synthase produces ATP from ADP in the presence of a proton or sodium gradient. F-type ATPases consist of two structural domains, F(1) containing the extramembraneous catalytic core and F(0) containing the membrane proton channel, linked together by a central stalk and a peripheral stalk. During catalysis, ATP synthesis in the catalytic domain of F(1) is coupled via a rotary mechanism of the central stalk subunits to proton translocation. Functionally, key component of the F(0) channel; it plays a direct role in translocation across the membrane. A homomeric c-ring of between 10-14 subunits forms the central stalk rotor element with the F(1) delta and epsilon subunits. The sequence is that of ATP synthase subunit c from Baumannia cicadellinicola subsp. Homalodisca coagulata.